Here is a 196-residue protein sequence, read N- to C-terminus: Na(+)-translocating ferredoxin:NAD(+) oxidoreductase complex subunit E (196 aa).

Helical transmembrane passes span 38 to 58 (MGMG…ISAL), 68 to 88 (IPAF…LMKA), 92 to 112 (ALDA…IILA), 127 to 147 (FADA…LGSI), and 169 to 189 (VLLM…IGLI).

It belongs to the NqrDE/RnfAE family. The complex is composed of six subunits: RnfA, RnfB, RnfC, RnfD, RnfE and RnfG.

Its subcellular location is the cell membrane. It catalyses the reaction 2 reduced [2Fe-2S]-[ferredoxin] + Na(+)(in) + NAD(+) + H(+) = 2 oxidized [2Fe-2S]-[ferredoxin] + Na(+)(out) + NADH. In terms of biological role, part of a membrane-bound complex that couples electron transfer with translocation of ions across the membrane. Couples electron transfer from reduced ferredoxin to NAD(+) with electrogenic movement of Na(+) out of the cell. Involved in caffeate respiration. The sequence is that of Na(+)-translocating ferredoxin:NAD(+) oxidoreductase complex subunit E from Acetobacterium woodii (strain ATCC 29683 / DSM 1030 / JCM 2381 / KCTC 1655 / WB1).